The sequence spans 458 residues: Serine--tRNA ligase (458 aa).

Residue Thr252–Glu254 coordinates L-serine. ATP is bound by residues Arg283–Glu285 and Val299. Glu306 is an L-serine binding site. Glu370–Ser373 is an ATP binding site. Thr405 contacts L-serine.

It belongs to the class-II aminoacyl-tRNA synthetase family. Type-1 seryl-tRNA synthetase subfamily. In terms of assembly, homodimer. The tRNA molecule binds across the dimer.

It localises to the cytoplasm. The enzyme catalyses tRNA(Ser) + L-serine + ATP = L-seryl-tRNA(Ser) + AMP + diphosphate + H(+). It catalyses the reaction tRNA(Sec) + L-serine + ATP = L-seryl-tRNA(Sec) + AMP + diphosphate + H(+). The protein operates within aminoacyl-tRNA biosynthesis; selenocysteinyl-tRNA(Sec) biosynthesis; L-seryl-tRNA(Sec) from L-serine and tRNA(Sec): step 1/1. Its function is as follows. Catalyzes the attachment of serine to tRNA(Ser). Is also able to aminoacylate tRNA(Sec) with serine, to form the misacylated tRNA L-seryl-tRNA(Sec), which will be further converted into selenocysteinyl-tRNA(Sec). This Sulfolobus acidocaldarius (strain ATCC 33909 / DSM 639 / JCM 8929 / NBRC 15157 / NCIMB 11770) protein is Serine--tRNA ligase.